Reading from the N-terminus, the 456-residue chain is RuvB-like 1 (456 aa).

An ATP-binding site is contributed by Gly-70–Thr-77.

This sequence belongs to the RuvB family. Forms homohexameric rings. Can form a dodecamer with ruvbl2 made of two stacked hexameric rings. Is a component of the RNA polymerase II holoenzyme complex. Component of the chromatin-remodeling Ino80 complex. Component of some MLL1/MLL complex.

The protein localises to the nucleus. The protein resides in the dynein axonemal particle. The enzyme catalyses ATP + H2O = ADP + phosphate + H(+). Has single-stranded DNA-stimulated ATPase and ATP-dependent DNA helicase (3' to 5') activity suggesting a role in nuclear processes such as recombination and transcription. Proposed core component of the chromatin remodeling INO80 complex which exhibits DNA- and nucleosome-activated ATPase activity and catalyzes ATP-dependent nucleosome sliding. The protein is RuvB-like 1 (ruvbl1) of Xenopus laevis (African clawed frog).